Reading from the N-terminus, the 61-residue chain is Small ribosomal subunit protein uS14 (61 aa).

Zn(2+) is bound by residues C24, C27, C40, and C43.

The protein belongs to the universal ribosomal protein uS14 family. Zinc-binding uS14 subfamily. In terms of assembly, part of the 30S ribosomal subunit. Contacts proteins S3 and S10. Zn(2+) serves as cofactor.

Its function is as follows. Binds 16S rRNA, required for the assembly of 30S particles and may also be responsible for determining the conformation of the 16S rRNA at the A site. This chain is Small ribosomal subunit protein uS14, found in Frankia casuarinae (strain DSM 45818 / CECT 9043 / HFP020203 / CcI3).